We begin with the raw amino-acid sequence, 127 residues long: Anti-adapter protein IraD (127 aa).

This sequence belongs to the GpW/Gp25 family. IraD subfamily. In terms of assembly, interacts with RssB.

It is found in the cytoplasm. In terms of biological role, inhibits RpoS proteolysis by regulating RssB activity, thereby increasing the stability of the sigma stress factor RpoS during oxidative stress. Its effect on RpoS stability is due to its interaction with RssB, which probably blocks the interaction of RssB with RpoS, and the consequent delivery of the RssB-RpoS complex to the ClpXP protein degradation pathway. In Escherichia coli O6:K15:H31 (strain 536 / UPEC), this protein is Anti-adapter protein IraD.